We begin with the raw amino-acid sequence, 315 residues long: WD repeat domain-containing protein 83 (315 aa).

7 WD repeats span residues 23 to 62, 65 to 104, 107 to 146, 151 to 188, 190 to 228, 231 to 272, and 275 to 313; these read CGQG…LLRT, GHGY…VVRK, GHAG…PEPV, EARD…VTSD, VGSP…LLGE, GHKN…LALA, and VGSN…AEGG.

The protein belongs to the WD repeat MORG1 family. As to quaternary structure, interacts with EGLN3/PHD3. Interacts with ERK signaling proteins MAP2K1/MEK1, MAP2K2/MEK2, LAMTOR3, ARAF/Raf-1, MAPK1/ERK2 and MAPK3/ERK1. Identified in the spliceosome C complex. Interacts with PARD6B and CRB3. Interacts strongly with GTP-bound RRAGA but not with inactive GDP-bound. Interacts with p62/SQSTM1. Highly expressed in testis and brain. Expressed at intermediate level in heart, liver and kidney. Weakly expressed in spleen and lung and absent in muscle.

It localises to the cytoplasm. It is found in the lysosome. Its subcellular location is the nucleus. Molecular scaffold protein for various multimeric protein complexes. Acts as a module in the assembly of a multicomponent scaffold for the ERK pathway, linking ERK responses to specific agonists. At low concentrations it enhances ERK activation, whereas high concentrations lead to the inhibition of ERK activation. Also involved in response to hypoxia by acting as a negative regulator of HIF1A/HIF-1-alpha via its interaction with EGLN3/PHD3. May promote degradation of HIF1A. May act by recruiting signaling complexes to a specific upstream activator. May also be involved in pre-mRNA splicing. Participates in tight junction development by regulating apico-basal polarity, a key step in tissue development and organization. Mechanistically, regulates the translocation of PAR6-aPKC from the cytoplasm to the apical surface by acting as an adapter between PARD6B AND CRB3. Also acts as a negative regulator of mTORC1 under nutrient-rich conditions by binding to the active Rag GTPases to inhibit mTORC1 localization to the lysosome and phosphorylation of downstream targets. This facilitates constitutive basal autophagy during nutrient availability. The sequence is that of WD repeat domain-containing protein 83 (Wdr83) from Rattus norvegicus (Rat).